A 284-amino-acid chain; its full sequence is Ribosomal RNA small subunit methyltransferase A (284 aa).

6 residues coordinate S-adenosyl-L-methionine: Asn28, Leu30, Gly55, Glu77, Asp103, and Asn123.

The protein belongs to the class I-like SAM-binding methyltransferase superfamily. rRNA adenine N(6)-methyltransferase family. RsmA subfamily.

The protein resides in the cytoplasm. The enzyme catalyses adenosine(1518)/adenosine(1519) in 16S rRNA + 4 S-adenosyl-L-methionine = N(6)-dimethyladenosine(1518)/N(6)-dimethyladenosine(1519) in 16S rRNA + 4 S-adenosyl-L-homocysteine + 4 H(+). Functionally, specifically dimethylates two adjacent adenosines (A1518 and A1519) in the loop of a conserved hairpin near the 3'-end of 16S rRNA in the 30S particle. May play a critical role in biogenesis of 30S subunits. The polypeptide is Ribosomal RNA small subunit methyltransferase A (Bradyrhizobium diazoefficiens (strain JCM 10833 / BCRC 13528 / IAM 13628 / NBRC 14792 / USDA 110)).